A 118-amino-acid chain; its full sequence is Large ribosomal subunit protein uL24 (118 aa).

This sequence belongs to the universal ribosomal protein uL24 family. Part of the 50S ribosomal subunit.

Functionally, one of two assembly initiator proteins, it binds directly to the 5'-end of the 23S rRNA, where it nucleates assembly of the 50S subunit. One of the proteins that surrounds the polypeptide exit tunnel on the outside of the subunit. In Synechococcus sp. (strain CC9605), this protein is Large ribosomal subunit protein uL24.